A 796-amino-acid polypeptide reads, in one-letter code: Protocadherin beta-3 (796 aa).

The first 26 residues, 1–26 (MEAGGERFLRQRQVLLLFVFLGGSLA), serve as a signal peptide directing secretion. Over 27 to 690 (GSESRRYSVA…AQADLLTVYL (664 aa)) the chain is Extracellular. 5 Cadherin domains span residues 35–133 (VAEE…SPVF), 138–242 (MHLK…APEF), 247–347 (YEVA…PPEL), 352–451 (VNSP…APAF), and 456–561 (YTLF…SPFV). Residue N169 is glycosylated (N-linked (GlcNAc...) asparagine). Residues N418 and N436 are each glycosylated (N-linked (GlcNAc...) asparagine). N567 carries N-linked (GlcNAc...) asparagine glycosylation. Residues 568 to 671 (GSAPCTELVP…LVDGFSQPYL (104 aa)) form the Cadherin 6 domain. The chain crosses the membrane as a helical span at residues 691-711 (VVALASVSSLFLFSVLLFVAV). Topologically, residues 712–796 (RLCRRSRAAS…PSFRKSFEFS (85 aa)) are cytoplasmic.

It is found in the cell membrane. Potential calcium-dependent cell-adhesion protein. May be involved in the establishment and maintenance of specific neuronal connections in the brain. This chain is Protocadherin beta-3 (PCDHB3), found in Homo sapiens (Human).